Reading from the N-terminus, the 294-residue chain is MLDKLATERRNEQTMHLDEMSIEERLTIMNAEDHKVPQVIQEQLPVITQVVERVIASFRKGGRLIYIGAGTSGRLGILDAAECVPTFGVSPNQVIGLIAGGERALIQAVEGAEDSKELAVTDLKALHLTAEDTVVGIAASGRTPYVVGGLDYARELGATTASISCNRDAVISRHADYPIEVETGPEVLTGSTRLKAGTAQKLVLNMISTTSMIGVGKVYQNLMVDVQPTNEKLEVRAKRMIAEATGVDMEMAARYFASSKGHVKTAIVMILADVSYEEAVKRLERANGFVREAL.

In terms of domain architecture, SIS spans 54 to 217 (VIASFRKGGR…STTSMIGVGK (164 aa)). Glu82 acts as the Proton donor in catalysis. Residue Glu113 is part of the active site.

Belongs to the GCKR-like family. MurNAc-6-P etherase subfamily. Homodimer.

It carries out the reaction N-acetyl-D-muramate 6-phosphate + H2O = N-acetyl-D-glucosamine 6-phosphate + (R)-lactate. It participates in amino-sugar metabolism; N-acetylmuramate degradation. Functionally, specifically catalyzes the cleavage of the D-lactyl ether substituent of MurNAc 6-phosphate, producing GlcNAc 6-phosphate and D-lactate. The protein is N-acetylmuramic acid 6-phosphate etherase of Exiguobacterium sp. (strain ATCC BAA-1283 / AT1b).